We begin with the raw amino-acid sequence, 209 residues long: Kynurenine formamidase (209 aa).

Substrate is bound at residue Phe19. Positions 49, 53, and 55 each coordinate Zn(2+). His59 (proton donor/acceptor) is an active-site residue. His160 and Glu172 together coordinate Zn(2+).

This sequence belongs to the Cyclase 1 superfamily. KynB family. As to quaternary structure, homodimer. The cofactor is Zn(2+).

It carries out the reaction N-formyl-L-kynurenine + H2O = L-kynurenine + formate + H(+). Its pathway is amino-acid degradation; L-tryptophan degradation via kynurenine pathway; L-kynurenine from L-tryptophan: step 2/2. Its function is as follows. Catalyzes the hydrolysis of N-formyl-L-kynurenine to L-kynurenine, the second step in the kynurenine pathway of tryptophan degradation. The polypeptide is Kynurenine formamidase (Delftia acidovorans (strain DSM 14801 / SPH-1)).